Reading from the N-terminus, the 113-residue chain is Small ribosomal subunit protein uS17 (113 aa).

This sequence belongs to the universal ribosomal protein uS17 family. Part of the 30S ribosomal subunit.

Functionally, one of the primary rRNA binding proteins, it binds specifically to the 5'-end of 16S ribosomal RNA. The sequence is that of Small ribosomal subunit protein uS17 from Pyrococcus furiosus (strain ATCC 43587 / DSM 3638 / JCM 8422 / Vc1).